The chain runs to 130 residues: Glycine cleavage system H protein (130 aa).

The Lipoyl-binding domain maps to 24 to 106 (EYTVGITEHA…YHEGWLFRIK (83 aa)). Residue Lys-65 is modified to N6-lipoyllysine.

Belongs to the GcvH family. The glycine cleavage system is composed of four proteins: P, T, L and H. The cofactor is (R)-lipoate.

Its function is as follows. The glycine cleavage system catalyzes the degradation of glycine. The H protein shuttles the methylamine group of glycine from the P protein to the T protein. The sequence is that of Glycine cleavage system H protein from Photorhabdus laumondii subsp. laumondii (strain DSM 15139 / CIP 105565 / TT01) (Photorhabdus luminescens subsp. laumondii).